A 586-amino-acid chain; its full sequence is Proline--tRNA ligase (586 aa).

The protein belongs to the class-II aminoacyl-tRNA synthetase family. ProS type 1 subfamily. In terms of assembly, homodimer.

Its subcellular location is the cytoplasm. It catalyses the reaction tRNA(Pro) + L-proline + ATP = L-prolyl-tRNA(Pro) + AMP + diphosphate. In terms of biological role, catalyzes the attachment of proline to tRNA(Pro) in a two-step reaction: proline is first activated by ATP to form Pro-AMP and then transferred to the acceptor end of tRNA(Pro). As ProRS can inadvertently accommodate and process non-cognate amino acids such as alanine and cysteine, to avoid such errors it has two additional distinct editing activities against alanine. One activity is designated as 'pretransfer' editing and involves the tRNA(Pro)-independent hydrolysis of activated Ala-AMP. The other activity is designated 'posttransfer' editing and involves deacylation of mischarged Ala-tRNA(Pro). The misacylated Cys-tRNA(Pro) is not edited by ProRS. This chain is Proline--tRNA ligase, found in Kineococcus radiotolerans (strain ATCC BAA-149 / DSM 14245 / SRS30216).